The primary structure comprises 359 residues: Guanine nucleotide-binding protein subunit alpha-11 (359 aa).

2 S-palmitoyl cysteine lipidation sites follow: Cys9 and Cys10. A G-alpha domain is found at 38 to 359 (RELKLLLLGT…QHNLKEYNLV (322 aa)). Residues 41-54 (KLLLLGTGESGKST) form a G1 motif region. GTP is bound by residues 46-53 (GTGESGKS) and 180-183 (LRVR). Position 53 (Ser53) interacts with Mg(2+). The segment at 178–186 (DVLRVRVPT) is G2 motif. Position 186 (Thr186) interacts with Mg(2+). Residues 201 to 210 (FRMVDVGGQR) form a G3 motif region. The segment at 270–277 (ILFLNKKD) is G4 motif. GTP is bound by residues 274–277 (NKKD) and Ala331. The segment at 329-334 (TCATDT) is G5 motif.

Belongs to the G-alpha family. G(q) subfamily. As to quaternary structure, g proteins are composed of 3 units; alpha, beta and gamma. The alpha chain contains the guanine nucleotide binding site.

The protein localises to the cell membrane. It localises to the cytoplasm. The enzyme catalyses GTP + H2O = GDP + phosphate + H(+). Guanine nucleotide-binding proteins (G proteins) function as transducers downstream of G protein-coupled receptors (GPCRs) in numerous signaling cascades. The alpha chain contains the guanine nucleotide binding site and alternates between an active, GTP-bound state and an inactive, GDP-bound state. Signaling by an activated GPCR promotes GDP release and GTP binding. The alpha subunit has a low GTPase activity that converts bound GTP to GDP, thereby terminating the signal. Both GDP release and GTP hydrolysis are modulated by numerous regulatory proteins. Signaling is mediated via phospholipase C-beta-dependent inositol lipid hydrolysis for signal propagation: activates phospholipase C-beta: following GPCR activation, GNA11 activates PLC-beta (PLCB1, PLCB2, PLCB3 or PLCB4), leading to production of diacylglycerol (DAG) and inositol 1,4,5-trisphosphate (IP3). The sequence is that of Guanine nucleotide-binding protein subunit alpha-11 (gna11) from Xenopus laevis (African clawed frog).